We begin with the raw amino-acid sequence, 380 residues long: Probable pectin lyase A (380 aa).

The signal sequence occupies residues 1 to 20 (MRYTSLFTAVTAALASTAAA). 2 disulfide bridges follow: C83–C102 and C92–C226. An N-linked (GlcNAc...) asparagine glycan is attached at N129. The active site involves R256. C323 and C331 are oxidised to a cystine.

The protein belongs to the polysaccharide lyase 1 family.

Its subcellular location is the secreted. The enzyme catalyses Eliminative cleavage of (1-&gt;4)-alpha-D-galacturonan methyl ester to give oligosaccharides with 4-deoxy-6-O-methyl-alpha-D-galact-4-enuronosyl groups at their non-reducing ends.. Its function is as follows. Pectinolytic enzymes consist of four classes of enzymes: pectin lyase, polygalacturonase, pectin methylesterase and rhamnogalacturonase. Among pectinolytic enzymes, pectin lyase is the most important in depolymerization of pectin, since it cleaves internal glycosidic bonds of highly methylated pectins. This chain is Probable pectin lyase A (pelA), found in Aspergillus fumigatus (strain ATCC MYA-4609 / CBS 101355 / FGSC A1100 / Af293) (Neosartorya fumigata).